The sequence spans 327 residues: rRNA 2'-O-methyltransferase fibrillarin (327 aa).

Residues Met1 to Glu95 are disordered. Positions Pro7 to Arg80 are enriched in gly residues. Residues Arg8, Arg15, Arg21, Arg24, Arg28, and Arg31 each carry the asymmetric dimethylarginine modification. Residues Lys90, Lys108, and Lys115 each participate in a glycyl lysine isopeptide (Lys-Gly) (interchain with G-Cter in SUMO2) cross-link. Position 108 is an N6-acetyllysine (Lys108). Phosphoserine is present on Ser122. At Lys127 the chain carries N6-acetyllysine. Phosphoserine is present on residues Ser130 and Ser132. Residues Lys137, Lys149, and Lys164 each participate in a glycyl lysine isopeptide (Lys-Gly) (interchain with G-Cter in SUMO2) cross-link. S-adenosyl-L-methionine-binding positions include Thr178–Thr179 and Glu197–Phe198. Residues Lys211 and Lys212 each carry the N6-acetyllysine modification. Residues Asp222–Ala223 and Asp242–Gln245 each bind S-adenosyl-L-methionine.

This sequence belongs to the methyltransferase superfamily. Fibrillarin family. As to quaternary structure, component of box C/D small nucleolar ribonucleoprotein (snoRNP) particles that contain SNU13, FBL, NOP5 and NOP56, plus a guide RNA. It is associated with the U3, U8, U13, X and Y small nuclear RNAs. Component of several ribosomal and nucleolar protein complexes. Part of the small subunit (SSU) processome, composed of more than 70 proteins and the RNA chaperone small nucleolar RNA (snoRNA) U3. Interacts with PRMT5 and UTP20. Interacts with DDX5 and C1QBP. Interacts with NOL11. Interacts with PIH1D1. Interacts with RRP1B. Interacts with NOLC1. Interacts with SDE2. Interacts with NOP2 and NOP56. Post-translationally, by homology to other fibrillarins, some or all of the N-terminal domain arginines are modified to asymmetric dimethylarginine (DMA). Ubiquitinated. Ubiquitination leads to proteasomal degradation. Deubiquitinated by USP36. In terms of processing, acetylated by CREBBP/CBP, preventing methylation of 'Gln-105' of histone H2A (H2AQ104me), without affecting rRNA methylation. Deacetylation by SIRT7 restores methylation of 'Gln-105' of histone H2A (H2AQ104me).

It localises to the nucleus. Its subcellular location is the nucleolus. The protein localises to the nucleoplasm. The enzyme catalyses L-glutaminyl-[histone H2A] + S-adenosyl-L-methionine = N(5)-methyl-L-glutaminyl-[histone H2A] + S-adenosyl-L-homocysteine + H(+). The catalysed reaction is a ribonucleotide in rRNA + S-adenosyl-L-methionine = a 2'-O-methylribonucleotide in rRNA + S-adenosyl-L-homocysteine + H(+). It catalyses the reaction a ribonucleotide in U6 snRNA + S-adenosyl-L-methionine = a 2'-O-methylribonucleotide in U6 snRNA + S-adenosyl-L-homocysteine + H(+). Functionally, S-adenosyl-L-methionine-dependent methyltransferase that has the ability to methylate both RNAs and proteins. Involved in pre-rRNA processing by catalyzing the site-specific 2'-hydroxyl methylation of ribose moieties in pre-ribosomal RNA. Site specificity is provided by a guide RNA that base pairs with the substrate. Methylation occurs at a characteristic distance from the sequence involved in base pairing with the guide RNA. Probably catalyzes 2'-O-methylation of U6 snRNAs in box C/D RNP complexes. U6 snRNA 2'-O-methylation is required for mRNA splicing fidelity. Also acts as a protein methyltransferase by mediating methylation of 'Gln-105' of histone H2A (H2AQ104me), a modification that impairs binding of the FACT complex and is specifically present at 35S ribosomal DNA locus. Part of the small subunit (SSU) processome, first precursor of the small eukaryotic ribosomal subunit. During the assembly of the SSU processome in the nucleolus, many ribosome biogenesis factors, an RNA chaperone and ribosomal proteins associate with the nascent pre-rRNA and work in concert to generate RNA folding, modifications, rearrangements and cleavage as well as targeted degradation of pre-ribosomal RNA by the RNA exosome. The polypeptide is rRNA 2'-O-methyltransferase fibrillarin (Mus musculus (Mouse)).